A 904-amino-acid polypeptide reads, in one-letter code: E3 ubiquitin-protein ligase ZNF598 (904 aa).

An RING-type zinc finger spans residues Cys-29–Arg-69. The segment at Pro-187–His-210 adopts a C2H2-type zinc-finger fold. Position 306 is a phosphotyrosine (Tyr-306). Disordered regions lie at residues Tyr-312–Leu-469 and Val-490–Pro-656. Residues Ala-346–Gln-358 show a composition bias toward low complexity. Positions Glu-359–Gly-388 are enriched in basic and acidic residues. Over residues Glu-404–Phe-416 the composition is skewed to polar residues. The span at Val-418–Gly-431 shows a compositional bias: low complexity. Gly-428, Gly-431, and Ser-437 each carry phosphoserine. Composition is skewed to low complexity over residues Ser-447–Thr-461 and Ser-502–Ser-513. Over residues Leu-521–Pro-531 the composition is skewed to polar residues. The span at Lys-534–Arg-543 shows a compositional bias: basic residues. Positions Leu-564–Pro-584 are enriched in polar residues.

This sequence belongs to the ZNF598/HEL2 family. Interacts with the E2 ubiquitin-conjugating enzyme UBE2D3. Component of the 4EHP-GYF2 complex, at least composed of EIF4E2, GIGYF2 and ZNF598.

It localises to the cytoplasm. It is found in the cytosol. The catalysed reaction is S-ubiquitinyl-[E2 ubiquitin-conjugating enzyme]-L-cysteine + [acceptor protein]-L-lysine = [E2 ubiquitin-conjugating enzyme]-L-cysteine + N(6)-ubiquitinyl-[acceptor protein]-L-lysine.. The protein operates within protein modification; protein ubiquitination. In terms of biological role, E3 ubiquitin-protein ligase that plays a key role in the ribosome quality control (RQC), a pathway that takes place when a ribosome has stalled during translation, leading to degradation of nascent peptide chains. ZNF598 is activated when ribosomes are stalled within an mRNA following translation of prematurely polyadenylated mRNAs. Acts as a ribosome collision sensor: specifically recognizes and binds collided di-ribosome, which arises when a trailing ribosome encounters a slower leading ribosome, leading to terminally arrest translation. Following binding to colliding ribosomes, mediates monoubiquitination of 40S ribosomal proteins RPS10/eS10 and RPS3/uS3, and 'Lys-63'-linked polyubiquitination of RPS20/uS10. Polyubiquitination of RPS20/uS10 promotes recruitment of the RQT (ribosome quality control trigger) complex, which drives the disassembly of stalled ribosomes, followed by degradation of nascent peptides. E3 ubiquitin-protein ligase activity is dependent on the E2 ubiquitin-conjugating enzyme UBE2D3. Also acts as an adapter that recruits the 4EHP-GYF2 complex to mRNAs. Independently of its role in RQC, may also act as a negative regulator of interferon-stimulated gene (ISG) expression. (Microbial infection) Required for poxvirus protein synthesis by mediating ubiquitination of RPS10/eS10 and RPS20/uS10. Poxvirus encoding mRNAs contain unusual 5' poly(A) leaders and ZNF598 is required for their translational efficiency, possibly via its ability to suppress readthrough or sliding on shorter poly(A) tracts. The sequence is that of E3 ubiquitin-protein ligase ZNF598 from Homo sapiens (Human).